The primary structure comprises 256 residues: UPF0246 protein HCH_04801 (256 aa).

It belongs to the UPF0246 family.

The chain is UPF0246 protein HCH_04801 from Hahella chejuensis (strain KCTC 2396).